A 953-amino-acid chain; its full sequence is Isoleucine--tRNA ligase (953 aa).

The short motif at 58 to 68 is the 'HIGH' region element; that stretch reads PYANGFIHLGH. Residue Glu573 participates in L-isoleucyl-5'-AMP binding. The 'KMSKS' region signature appears at 614–618; that stretch reads KMSKS. Lys617 provides a ligand contact to ATP. Zn(2+) contacts are provided by Cys916, Cys919, Cys936, and Cys939.

It belongs to the class-I aminoacyl-tRNA synthetase family. IleS type 1 subfamily. In terms of assembly, monomer. The cofactor is Zn(2+).

It localises to the cytoplasm. The enzyme catalyses tRNA(Ile) + L-isoleucine + ATP = L-isoleucyl-tRNA(Ile) + AMP + diphosphate. In terms of biological role, catalyzes the attachment of isoleucine to tRNA(Ile). As IleRS can inadvertently accommodate and process structurally similar amino acids such as valine, to avoid such errors it has two additional distinct tRNA(Ile)-dependent editing activities. One activity is designated as 'pretransfer' editing and involves the hydrolysis of activated Val-AMP. The other activity is designated 'posttransfer' editing and involves deacylation of mischarged Val-tRNA(Ile). The protein is Isoleucine--tRNA ligase of Blochmanniella floridana.